The following is a 309-amino-acid chain: Dioxygenase af480 (309 aa).

The Fe cation site is built by His153, Asp155, and His228.

The protein belongs to the PhyH family. Fe cation serves as cofactor.

The enzyme catalyses 5-dehydro-6-demethoxyfumagillol + 2-oxoglutarate + O2 = 5-dehydro-6-demethoxy-6-hydroxyfumagillol + succinate + CO2. The protein operates within secondary metabolite biosynthesis; terpenoid biosynthesis. Functionally, dioxygenase; part of the gene cluster that mediates the biosynthesis of fumagillin, a meroterpenoid that has numerous biological activities including irreversible inhibition of human type 2 methionine aminopeptidase (METAP2). Within the pathway, the dioxygenase af480 acts as a 5-dehydro-6-demethoxyfumagillol dioxygenase that hydroylates 5-keto-demethoxyfumagillol at position C-6. The pathway begins with the conversion of farnesyl pyrophosphate (FPP) to beta-trans-bergamotene by the membrane-bound beta-trans-bergamotene synthase af520. The multifunctional cytochrome P450 monooxygenase af510 then converts beta-trans-bergamotene into 5-keto-demethoxyfumagillol via several oxydation steps. 5-keto-demethoxyfumagillol is then subjected to successive C-6 hydroxylation and O-methylation by the dioxygenase af480 and O-methyltransferase af390-400, respectively, to yield 5-keto-fumagillol, which is then stereoselectively reduced by the keto-reductase af490 to 5R-hydroxy-seco-sesquiterpene. The next step is the polyketide transferase af380-catalyzed transfer of a dodecapentaenoyl group synthesized by the polyketide synthase af370 onto 5R-hydroxy-seco-sesquiterpene which leads to the production of prefumagillin. Finally, oxidative cleavage by the monooxygenase af470 converts prefumagillin to fumagillin. This chain is Dioxygenase af480, found in Aspergillus fumigatus (strain ATCC MYA-4609 / CBS 101355 / FGSC A1100 / Af293) (Neosartorya fumigata).